A 361-amino-acid chain; its full sequence is MSGNGGAATTAEENGSMMRVIRVGTRKSQLARIQTDTVVAMLKTLYPGIQFEIIAMSTTGDKILDTALSKIGEKSLFTKELENALEKNEVDLVVHSLKDVPTILPPGFTIGAICKRENPCDAVVFHPKFIGKTLETLPEKSAVGTSSLRRVAQLQRKFPHLEFKSIRGNLNTRLRKLDEQLEFSAIILAVAGLQRMGWQNRVGQILHPEECMYAVGQGALAVEVRAKDQDILDLVGVLHDPETLLRCIAERAFLRHLEGGCSVPVAVHTVMKDGQLYLTGGVWSLDGSDSMQETMQATIQVPVQQEDGPEDDPQLVGITARNIPRGAQLAAENLGISLASLLLNKGAKNILDVARQLNDVR.

Position 2 is an N-acetylserine (Ser-2). The residue at position 69 (Ser-69) is a Phosphoserine. At Lys-74 the chain carries N6-acetyllysine. Ser-147 carries the post-translational modification Phosphoserine. Cys-261 carries the post-translational modification S-(dipyrrolylmethanemethyl)cysteine.

This sequence belongs to the HMBS family. As to quaternary structure, monomer. Dipyrromethane is required as a cofactor.

The protein localises to the cytoplasm. Its subcellular location is the cytosol. It carries out the reaction 4 porphobilinogen + H2O = hydroxymethylbilane + 4 NH4(+). The protein operates within porphyrin-containing compound metabolism; protoporphyrin-IX biosynthesis; coproporphyrinogen-III from 5-aminolevulinate: step 2/4. Its function is as follows. As part of the heme biosynthetic pathway, catalyzes the sequential polymerization of four molecules of porphobilinogen to form hydroxymethylbilane, also known as preuroporphyrinogen. Catalysis begins with the assembly of the dipyrromethane cofactor by the apoenzyme from two molecules of porphobilinogen or from preuroporphyrinogen. The covalently linked cofactor acts as a primer, around which the tetrapyrrole product is assembled. In the last step of catalysis, the product, preuroporphyrinogen, is released, leaving the cofactor bound to the holodeaminase intact. The polypeptide is Porphobilinogen deaminase (Hmbs) (Rattus norvegicus (Rat)).